Here is a 151-residue protein sequence, read N- to C-terminus: UPF0178 protein PMI1258 (151 aa).

It belongs to the UPF0178 family.

The protein is UPF0178 protein PMI1258 of Proteus mirabilis (strain HI4320).